A 237-amino-acid polypeptide reads, in one-letter code: Ribosomal RNA small subunit methyltransferase G (237 aa).

S-adenosyl-L-methionine is bound by residues glycine 75, phenylalanine 80, 127 to 128 (AE), and arginine 146.

The protein belongs to the methyltransferase superfamily. RNA methyltransferase RsmG family.

The protein resides in the cytoplasm. In terms of biological role, specifically methylates the N7 position of a guanine in 16S rRNA. The sequence is that of Ribosomal RNA small subunit methyltransferase G from Synechococcus sp. (strain RCC307).